Reading from the N-terminus, the 680-residue chain is Methionine--tRNA ligase (680 aa).

The 'HIGH' region motif lies at 15–25 (PYANGPVHIGH). Positions 147, 150, 160, and 163 each coordinate Zn(2+). Residues 332-336 (KISTS) carry the 'KMSKS' region motif. Thr-335 serves as a coordination point for ATP. The tRNA-binding domain occupies 579–680 (DFLKLDIRVG…AEVAAGSQVK (102 aa)).

Belongs to the class-I aminoacyl-tRNA synthetase family. MetG type 1 subfamily. In terms of assembly, homodimer. Zn(2+) serves as cofactor.

Its subcellular location is the cytoplasm. It carries out the reaction tRNA(Met) + L-methionine + ATP = L-methionyl-tRNA(Met) + AMP + diphosphate. Functionally, is required not only for elongation of protein synthesis but also for the initiation of all mRNA translation through initiator tRNA(fMet) aminoacylation. The chain is Methionine--tRNA ligase from Porphyromonas gingivalis (strain ATCC BAA-308 / W83).